The sequence spans 118 residues: Large ribosomal subunit protein bL17 (118 aa).

This sequence belongs to the bacterial ribosomal protein bL17 family. In terms of assembly, part of the 50S ribosomal subunit. Contacts protein L32.

This is Large ribosomal subunit protein bL17 from Hydrogenobaculum sp. (strain Y04AAS1).